A 354-amino-acid chain; its full sequence is tRNA-specific 2-thiouridylase MnmA (354 aa).

Residues 6-13 (LLSGGVDS) and Leu33 contribute to the ATP site. The active-site Nucleophile is Cys100. A disulfide bond links Cys100 and Cys195. Residue Gly123 coordinates ATP. The interval 145-147 (KDQ) is interaction with tRNA. Cys195 acts as the Cysteine persulfide intermediate in catalysis.

This sequence belongs to the MnmA/TRMU family.

It localises to the cytoplasm. It carries out the reaction S-sulfanyl-L-cysteinyl-[protein] + uridine(34) in tRNA + AH2 + ATP = 2-thiouridine(34) in tRNA + L-cysteinyl-[protein] + A + AMP + diphosphate + H(+). Catalyzes the 2-thiolation of uridine at the wobble position (U34) of tRNA, leading to the formation of s(2)U34. This chain is tRNA-specific 2-thiouridylase MnmA, found in Borrelia recurrentis (strain A1).